Here is a 127-residue protein sequence, read N- to C-terminus: UPF0102 protein Glov_2230 (127 aa).

It belongs to the UPF0102 family.

The sequence is that of UPF0102 protein Glov_2230 from Trichlorobacter lovleyi (strain ATCC BAA-1151 / DSM 17278 / SZ) (Geobacter lovleyi).